The primary structure comprises 166 residues: Small ribosomal subunit protein uS5 (166 aa).

The region spanning 11–74 (LIDKVVHISR…ESAKRTMFEV (64 aa)) is the S5 DRBM domain.

This sequence belongs to the universal ribosomal protein uS5 family. Part of the 30S ribosomal subunit. Contacts proteins S4 and S8.

With S4 and S12 plays an important role in translational accuracy. Functionally, located at the back of the 30S subunit body where it stabilizes the conformation of the head with respect to the body. This chain is Small ribosomal subunit protein uS5, found in Syntrophobacter fumaroxidans (strain DSM 10017 / MPOB).